We begin with the raw amino-acid sequence, 273 residues long: Putative carboxypeptidase YodJ (273 aa).

Residues 1–23 (MKKSGKWFSLAAALSVTAIVGAG) form the signal peptide. Cys-24 is lipidated: N-palmitoyl cysteine. A lipid anchor (S-diacylglycerol cysteine) is attached at Cys-24. Positions 27–58 (SNGDAQKDTKTTAETKQTEQKTADSKKSNTQN) are disordered. Residues 31–53 (AQKDTKTTAETKQTEQKTADSKK) show a composition bias toward basic and acidic residues.

The protein belongs to the peptidase M15B family.

The protein localises to the cell membrane. This Bacillus subtilis (strain 168) protein is Putative carboxypeptidase YodJ (yodJ).